Consider the following 384-residue polypeptide: Sialyltransferase-like protein 3 (384 aa).

At 1 to 5 the chain is on the cytoplasmic side; sequence MKRRH. Residues 6–26 form a helical; Signal-anchor for type II membrane protein membrane-spanning segment; it reads WSHPSCGLLLLVAVFCLLLVF. Topologically, residues 27 to 384 are lumenal; the sequence is RCSQLRHSGD…FRLPPVSFYR (358 aa). An N-linked (GlcNAc...) asparagine glycan is attached at Asn-241.

The protein belongs to the glycosyltransferase 29 family.

It is found in the golgi apparatus membrane. Possesses sialyltransferase-like activity in vitro. Transfers sialic acid to the glycoprotein asialofetuin. The transferred sialic acid is linked to galactose of Gal-beta-1,3-GalNAc through alpha-2,6-linkage. In Oryza sativa subsp. japonica (Rice), this protein is Sialyltransferase-like protein 3.